An 859-amino-acid chain; its full sequence is Leucine--tRNA ligase (859 aa).

The 'HIGH' region signature appears at 42–52; it reads PYPSGRLHMGH. The short motif at 618–622 is the 'KMSKS' region element; it reads KMSKS. ATP is bound at residue Lys-621.

The protein belongs to the class-I aminoacyl-tRNA synthetase family.

The protein localises to the cytoplasm. It carries out the reaction tRNA(Leu) + L-leucine + ATP = L-leucyl-tRNA(Leu) + AMP + diphosphate. The polypeptide is Leucine--tRNA ligase (Shewanella pealeana (strain ATCC 700345 / ANG-SQ1)).